Reading from the N-terminus, the 166-residue chain is Crossover junction endodeoxyribonuclease RuvC (166 aa).

Residues aspartate 12, glutamate 71, and aspartate 143 contribute to the active site. Residues aspartate 12, glutamate 71, and aspartate 143 each contribute to the Mg(2+) site.

It belongs to the RuvC family. As to quaternary structure, homodimer which binds Holliday junction (HJ) DNA. The HJ becomes 2-fold symmetrical on binding to RuvC with unstacked arms; it has a different conformation from HJ DNA in complex with RuvA. In the full resolvosome a probable DNA-RuvA(4)-RuvB(12)-RuvC(2) complex forms which resolves the HJ. Requires Mg(2+) as cofactor.

It localises to the cytoplasm. The catalysed reaction is Endonucleolytic cleavage at a junction such as a reciprocal single-stranded crossover between two homologous DNA duplexes (Holliday junction).. Its function is as follows. The RuvA-RuvB-RuvC complex processes Holliday junction (HJ) DNA during genetic recombination and DNA repair. Endonuclease that resolves HJ intermediates. Cleaves cruciform DNA by making single-stranded nicks across the HJ at symmetrical positions within the homologous arms, yielding a 5'-phosphate and a 3'-hydroxyl group; requires a central core of homology in the junction. The consensus cleavage sequence is 5'-(A/T)TT(C/G)-3'. Cleavage occurs on the 3'-side of the TT dinucleotide at the point of strand exchange. HJ branch migration catalyzed by RuvA-RuvB allows RuvC to scan DNA until it finds its consensus sequence, where it cleaves and resolves the cruciform DNA. This Oleidesulfovibrio alaskensis (strain ATCC BAA-1058 / DSM 17464 / G20) (Desulfovibrio alaskensis) protein is Crossover junction endodeoxyribonuclease RuvC.